Consider the following 252-residue polypeptide: 2-succinyl-6-hydroxy-2,4-cyclohexadiene-1-carboxylate synthase (252 aa).

It belongs to the AB hydrolase superfamily. MenH family. Monomer.

It catalyses the reaction 5-enolpyruvoyl-6-hydroxy-2-succinyl-cyclohex-3-ene-1-carboxylate = (1R,6R)-6-hydroxy-2-succinyl-cyclohexa-2,4-diene-1-carboxylate + pyruvate. The protein operates within quinol/quinone metabolism; 1,4-dihydroxy-2-naphthoate biosynthesis; 1,4-dihydroxy-2-naphthoate from chorismate: step 3/7. Its pathway is quinol/quinone metabolism; menaquinone biosynthesis. Functionally, catalyzes a proton abstraction reaction that results in 2,5-elimination of pyruvate from 2-succinyl-5-enolpyruvyl-6-hydroxy-3-cyclohexene-1-carboxylate (SEPHCHC) and the formation of 2-succinyl-6-hydroxy-2,4-cyclohexadiene-1-carboxylate (SHCHC). This Escherichia coli (strain UTI89 / UPEC) protein is 2-succinyl-6-hydroxy-2,4-cyclohexadiene-1-carboxylate synthase.